The chain runs to 439 residues: GTPase Der (439 aa).

EngA-type G domains are found at residues 4–168 (PIVA…KDDE) and 177–352 (INIA…DNYT). Residues 10–17 (GRPNVGKS), 57–61 (DTGGI), 120–123 (NKID), 183–190 (GKPNVGKS), 230–234 (DTAGL), and 295–298 (NKWD) each bind GTP. The KH-like domain maps to 353–437 (KRVKTGVLND…GIKLEFRERK (85 aa)).

Belongs to the TRAFAC class TrmE-Era-EngA-EngB-Septin-like GTPase superfamily. EngA (Der) GTPase family. In terms of assembly, associates with the 50S ribosomal subunit.

Its function is as follows. GTPase that plays an essential role in the late steps of ribosome biogenesis. The protein is GTPase Der of Clostridium botulinum (strain Kyoto / Type A2).